A 165-amino-acid chain; its full sequence is Nutritionally-regulated adipose and cardiac-enriched protein (165 aa).

Residues 1–47 (MRSAARVSRSNSHPRTRHPTRENEGTTWGSQPSRTERDGDRKCPPSI) are disordered. Over residues 34 to 43 (RTERDGDRKC) the composition is skewed to basic and acidic residues. A helical transmembrane segment spans residues 112–132 (GSLFLWLTLCALLGVVLVLYC).

As to expression, predominantly expressed in white adipose tissue (at protein level) and brown adipose tissue. Also detected in heart.

The protein resides in the cell membrane. This chain is Nutritionally-regulated adipose and cardiac-enriched protein (Nrac), found in Mus musculus (Mouse).